The primary structure comprises 238 residues: Thymidine kinase a (238 aa).

Residues 38 to 45 (GPMFSGKS), 70 to 72 (DTR), and 115 to 118 (DEAQ) each bind ATP. Catalysis depends on Glu-116, which acts as the Proton acceptor. Tyr-147 serves as a coordination point for substrate. Residues Cys-172 and Cys-175 each contribute to the Zn(2+) site. Residues 191–195 (TELIG) and Tyr-200 each bind substrate. Zn(2+) is bound at residue Cys-204.

The protein belongs to the thymidine kinase family. Monomer and dimer. Dimerization is stimulated by ATP. In terms of tissue distribution, expressed ubiquitously.

Its subcellular location is the cytoplasm. It carries out the reaction thymidine + ATP = dTMP + ADP + H(+). The protein operates within purine metabolism. Its pathway is pyrimidine metabolism. In terms of biological role, part of the salvage pathway for purine and pyrimidine deoxyribonucleotide synthesis. Phosphorylates preferentially purines over pyrimidines. Mediates tolerance to genotoxins, such as ultraviolet-C (UV-C) irradiation, MMC, a DNA crosslinker, and ZEO, a DNA intercalator, that induce double-strand breaks and thus contributes to several DNA repair pathways by providing deoxythymidine triphosphate that serve as precursors for DNA repair and to balance deoxyribonucleotides pools. The sequence is that of Thymidine kinase a from Arabidopsis thaliana (Mouse-ear cress).